The sequence spans 627 residues: Mitochondrial Rho GTPase 1 (627 aa).

A Miro 1 domain is found at 1–169; it reads MATVRICVCG…FFLCQKAVTH (169 aa). Over 1-599 the chain is Cytoplasmic; it reads MATVRICVCG…PRSNEEGPDR (599 aa). GTP contacts are provided by residues 10-17, 58-62, and 114-117; these read GDESTGKS, DTSAR, and NKSD. EF-hand domains are found at residues 185–220 and 305–340; these read LCINALKRIFYLCDKDQDGYLNEQEMRDFQARCFDK and AGYRFFVDLFLIFDKDNDGGLNDEELEALFAPAPGL. D198, D200, D202, Y204, E209, D318, D320, D322, and E329 together coordinate Ca(2+). Residues 420 to 584 form the Miro 2 domain; that stretch reads RNVVLCYVLG…FVAYADAATT (165 aa). GTP contacts are provided by residues 429 to 436, 465 to 469, and 534 to 537; these read GASGAGKS, ELPGG, and LKAD. The helical; Anchor for type IV membrane protein transmembrane segment at 600–620 threads the bilayer; the sequence is TSLYIALGATACAGVAALTIW. Residues 621–627 are Mitochondrial intermembrane-facing; it reads RRATNAL.

Belongs to the mitochondrial Rho GTPase family.

It localises to the mitochondrion outer membrane. Mitochondrial GTPase involved in mitochondrial trafficking. Probably involved in control of anterograde transport of mitochondria and their subcellular distribution. This Gibberella zeae (strain ATCC MYA-4620 / CBS 123657 / FGSC 9075 / NRRL 31084 / PH-1) (Wheat head blight fungus) protein is Mitochondrial Rho GTPase 1 (GEM1).